The following is a 334-amino-acid chain: tRNA methyltransferase 10 homolog A (334 aa).

Disordered regions lie at residues 1–101 (MSLE…SRKR) and 290–334 (PLTE…EQNS). Residues 26-40 (HAGNNTPLQENSSAP) are compositionally biased toward polar residues. Residues 62–94 (KQWEDQRELRKQKRKEKRQKRKLERQAQAEHNI) adopt a coiled-coil conformation. The span at 71-84 (RKQKRKEKRQKRKL) shows a compositional bias: basic residues. Residues 85–98 (ERQAQAEHNIDANS) show a composition bias toward basic and acidic residues. The region spanning 98-289 (SRKRFRHEVQ…SVLPQRKGAI (192 aa)) is the SAM-dependent MTase TRM10-type domain. The segment covering 305–317 (QEDGEDSDSDSSI) has biased composition (acidic residues).

Belongs to the class IV-like SAM-binding methyltransferase superfamily. TRM10 family.

The catalysed reaction is guanosine(9) in tRNA + S-adenosyl-L-methionine = N(1)-methylguanosine(9) in tRNA + S-adenosyl-L-homocysteine + H(+). S-adenosyl-L-methionine-dependent guanine N(1)-methyltransferase that catalyzes the formation of N(1)-methylguanine at position 9 (m1G9) in tRNAs. Probably not able to catalyze formation of N(1)-methyladenine at position 9 (m1A9) in tRNAs. This is tRNA methyltransferase 10 homolog A (trmt10a) from Xenopus tropicalis (Western clawed frog).